We begin with the raw amino-acid sequence, 276 residues long: MKFGIVARRDREEALKLAYRVYDFLKVNNYEVYVDEEAYIHFPHFSSEDVLSLKKMDVDMIIAIGGDGTVLRVEHNTSKDIPILAVNMGTLGFLAEIEPAETFFAISRILEGDYFIDERMKIRVFVEDVSIPDALNDVVILTSIPGKVTHLKYYVDGELAEDIRADGLIISTPTGSTAYALSAGGPLVDPRLHAILLVPLAPVALTARPLVVPDCSSIEIEVLTEREIVLTVDGQFYTQLPSNLKIRVEKSPRKTKFVRFSERIYPKYTLKIKKKF.

The active-site Proton acceptor is the D67. NAD(+) is bound by residues 67-68, R72, 136-137, K147, R164, D166, 177-182, A201, and Q235; these read DG, ND, and TAYALS.

This sequence belongs to the NAD kinase family. A divalent metal cation is required as a cofactor.

Its subcellular location is the cytoplasm. The enzyme catalyses NAD(+) + ATP = ADP + NADP(+) + H(+). Its function is as follows. Involved in the regulation of the intracellular balance of NAD and NADP, and is a key enzyme in the biosynthesis of NADP. Catalyzes specifically the phosphorylation on 2'-hydroxyl of the adenosine moiety of NAD to yield NADP. In Thermococcus sibiricus (strain DSM 12597 / MM 739), this protein is NAD kinase.